Consider the following 139-residue polypeptide: ATP synthase epsilon chain (139 aa).

This sequence belongs to the ATPase epsilon chain family. As to quaternary structure, F-type ATPases have 2 components, CF(1) - the catalytic core - and CF(0) - the membrane proton channel. CF(1) has five subunits: alpha(3), beta(3), gamma(1), delta(1), epsilon(1). CF(0) has three main subunits: a, b and c.

Its subcellular location is the cell inner membrane. Produces ATP from ADP in the presence of a proton gradient across the membrane. The protein is ATP synthase epsilon chain of Serratia proteamaculans (strain 568).